Here is a 77-residue protein sequence, read N- to C-terminus: Apelin (77 aa).

The signal sequence occupies residues 1-22 (MNLRLCVQALLLLWLSLTAVCG). Positions 23 to 41 (VPLMLPPDGTGLEEGSMRY) are excised as a propeptide. Residues 46–77 (RTSRTGPGAWQGGRRKFRRQRPRLSHKGPMPF) are disordered. The span at 58–71 (GRRKFRRQRPRLSH) shows a compositional bias: basic residues.

The protein belongs to the apelin family. Several active peptides may be produced by proteolytic processing of the peptide precursor. In terms of tissue distribution, expressed in extraembryonic visceral endoderm and in the primitive streak at 6.5 and 7.5 dpc. Expressed in the anterior visceral yolk sac at 8.25 dpc. Expressed weakly in the embryonic heart at 11.5 dpc. Expressed in the adult heart. Expressed in endothelial cells and cardiomyocytes and weakly expressed in fibroblasts.

The protein localises to the secreted. The protein resides in the extracellular space. Peptide hormone that functions as endogenous ligand for the G-protein-coupled apelin receptor (APLNR/APJ). Functions as a balanced agonist activating both G(i) protein pathway and beta-arrestin pathway of APLNR. Downstream G proteins activation, apelin can inhibit cAMP production and activate key intracellular effectors such as ERKs. On the other hand, APLNR activation induces beta-arrestin recruitment to the membrane leading to desensitization and internalization of the receptor. Apelin also blunts mechanical stretch-induced hypertrophic induction from APLNR. Apelin-36 dissociates more hardly than (pyroglu)apelin-13 from APLNR. Involved in the regulation of cardiac precursor cell movements during gastrulation and heart morphogenesis. Has an inhibitory effect on cytokine production in response to T-cell receptor/CD3 cross-linking; the oral intake of apelin in the colostrum and the milk might therefore modulate immune responses in neonates. Plays a role in early coronary blood vessels formation. Mediates myocardial contractility in an ERK1/2-dependent manner. May also have a role in the central control of body fluid homeostasis by influencing vasopressin release and drinking behavior. The chain is Apelin from Mus musculus (Mouse).